Reading from the N-terminus, the 504-residue chain is Signal transduction histidine-protein kinase/phosphatase MprB (504 aa).

Residues 1-26 (MWWFRRRDRAPLRATSSLSLRWRVML) lie on the Cytoplasmic side of the membrane. Residues 27 to 47 (LAMSMVAMVVVLMSFAVYAVI) traverse the membrane as a helical segment. Residues 48–163 (SAALYSDIDN…PTEAVMNKLR (116 aa)) are Extracellular-facing. Residues 164 to 184 (WVLLIVGGIGVAVAAVAGGMV) form a helical membrane-spanning segment. Topologically, residues 185 to 504 (TRAGLRPVGR…SVESQSTRAT (320 aa)) are cytoplasmic. The HAMP domain maps to 186–238 (RAGLRPVGRLTEAAERVARTDDLRPIPVFGSDELARLTEAFNLMLRALAESRE). The region spanning 246 to 466 (DAGHELRTPL…SIYVLLPGRR (221 aa)) is the Histidine kinase domain. Histidine 249 carries the post-translational modification Phosphohistidine; by autocatalysis. The segment at 471–504 (QLPGATAGARSTDIENSRGSANVISVESQSTRAT) is disordered. Residues 487–504 (SRGSANVISVESQSTRAT) show a composition bias toward polar residues.

Mg(2+) is required as a cofactor. The cofactor is Mn(2+). Autophosphorylated.

The protein resides in the cell membrane. The catalysed reaction is ATP + protein L-histidine = ADP + protein N-phospho-L-histidine.. Its function is as follows. Member of the two-component regulatory system MprB/MprA which contributes to maintaining a balance among several systems involved in stress resistance and is required for establishment and maintenance of persistent infection in the host. In response to environmental signals MprB acts both as a membrane-associated protein kinase that undergoes autophosphorylation and subsequently transfers the phosphate to MprA, and a protein phosphatase that dephosphorylates phospho-MprA. The polypeptide is Signal transduction histidine-protein kinase/phosphatase MprB (mprB) (Mycobacterium tuberculosis (strain ATCC 25177 / H37Ra)).